We begin with the raw amino-acid sequence, 452 residues long: Bifunctional protein GlmU (452 aa).

Residues 1–226 (MNFSAVILAA…PIEVEGVNDR (226 aa)) form a pyrophosphorylase region. UDP-N-acetyl-alpha-D-glucosamine contacts are provided by residues 8–11 (LAAG), Lys22, Gln73, 78–79 (GT), 100–102 (YGD), Gly137, Glu151, Asn166, and Asn224. Asp102 contacts Mg(2+). Asn224 provides a ligand contact to Mg(2+). Residues 227–247 (AQLARLERAYQAAQAQKLLEQ) form a linker region. An N-acetyltransferase region spans residues 248–452 (GVMLRDPSRF…IANWQRPTKK (205 aa)). Positions 330 and 348 each coordinate UDP-N-acetyl-alpha-D-glucosamine. His360 (proton acceptor) is an active-site residue. UDP-N-acetyl-alpha-D-glucosamine contacts are provided by Tyr363 and Asn374. Residues Ala377, 383 to 384 (NY), Ser402, Ala420, and Arg437 contribute to the acetyl-CoA site.

It in the N-terminal section; belongs to the N-acetylglucosamine-1-phosphate uridyltransferase family. The protein in the C-terminal section; belongs to the transferase hexapeptide repeat family. In terms of assembly, homotrimer. The cofactor is Mg(2+).

The protein resides in the cytoplasm. It catalyses the reaction alpha-D-glucosamine 1-phosphate + acetyl-CoA = N-acetyl-alpha-D-glucosamine 1-phosphate + CoA + H(+). The catalysed reaction is N-acetyl-alpha-D-glucosamine 1-phosphate + UTP + H(+) = UDP-N-acetyl-alpha-D-glucosamine + diphosphate. It participates in nucleotide-sugar biosynthesis; UDP-N-acetyl-alpha-D-glucosamine biosynthesis; N-acetyl-alpha-D-glucosamine 1-phosphate from alpha-D-glucosamine 6-phosphate (route II): step 2/2. It functions in the pathway nucleotide-sugar biosynthesis; UDP-N-acetyl-alpha-D-glucosamine biosynthesis; UDP-N-acetyl-alpha-D-glucosamine from N-acetyl-alpha-D-glucosamine 1-phosphate: step 1/1. Its pathway is bacterial outer membrane biogenesis; LPS lipid A biosynthesis. In terms of biological role, catalyzes the last two sequential reactions in the de novo biosynthetic pathway for UDP-N-acetylglucosamine (UDP-GlcNAc). The C-terminal domain catalyzes the transfer of acetyl group from acetyl coenzyme A to glucosamine-1-phosphate (GlcN-1-P) to produce N-acetylglucosamine-1-phosphate (GlcNAc-1-P), which is converted into UDP-GlcNAc by the transfer of uridine 5-monophosphate (from uridine 5-triphosphate), a reaction catalyzed by the N-terminal domain. The sequence is that of Bifunctional protein GlmU from Aliivibrio fischeri (strain ATCC 700601 / ES114) (Vibrio fischeri).